Here is a 53-residue protein sequence, read N- to C-terminus: Unknown protein from 2D-PAGE of needles (53 aa).

The protein is Unknown protein from 2D-PAGE of needles of Pinus pinaster (Maritime pine).